A 195-amino-acid polypeptide reads, in one-letter code: Thymidylate kinase (195 aa).

7 to 14 is an ATP binding site; that stretch reads GVDTCGKS.

This sequence belongs to the thymidylate kinase family.

The catalysed reaction is dTMP + ATP = dTDP + ADP. Its function is as follows. Phosphorylation of dTMP to form dTDP in both de novo and salvage pathways of dTTP synthesis. This Helicobacter hepaticus (strain ATCC 51449 / 3B1) protein is Thymidylate kinase.